Consider the following 212-residue polypeptide: Translation initiation factor IF-3 (212 aa).

The span at 190 to 203 (LVDKNSDSQDKSVS) shows a compositional bias: basic and acidic residues. A disordered region spans residues 190–212 (LVDKNSDSQDKSVSEEDTNEGEQ).

The protein belongs to the IF-3 family. Monomer.

The protein localises to the cytoplasm. IF-3 binds to the 30S ribosomal subunit and shifts the equilibrium between 70S ribosomes and their 50S and 30S subunits in favor of the free subunits, thus enhancing the availability of 30S subunits on which protein synthesis initiation begins. The chain is Translation initiation factor IF-3 from Mycoplasmopsis fermentans (Mycoplasma fermentans).